The chain runs to 188 residues: Putative manganese efflux pump MntP (188 aa).

The next 6 membrane-spanning stretches (helical) occupy residues 3–23 (WLTI…VALA), 39–59 (LGFH…LLGM), 65–85 (ISAY…GRMV), 104–124 (GMTM…VGLS), 125–145 (IAML…VAGV), and 167–187 (ICGG…HTLL).

Belongs to the MntP (TC 9.B.29) family.

Its subcellular location is the cell inner membrane. In terms of biological role, probably functions as a manganese efflux pump. The polypeptide is Putative manganese efflux pump MntP (Citrifermentans bemidjiense (strain ATCC BAA-1014 / DSM 16622 / JCM 12645 / Bem) (Geobacter bemidjiensis)).